The sequence spans 210 residues: Dephospho-CoA kinase (210 aa).

The DPCK domain maps to 4-202 (WVGLTGGIGS…AFYSGIFASK (199 aa)). 12–17 (GSGKSA) contributes to the ATP binding site.

This sequence belongs to the CoaE family.

It localises to the cytoplasm. It carries out the reaction 3'-dephospho-CoA + ATP = ADP + CoA + H(+). Its pathway is cofactor biosynthesis; coenzyme A biosynthesis; CoA from (R)-pantothenate: step 5/5. Catalyzes the phosphorylation of the 3'-hydroxyl group of dephosphocoenzyme A to form coenzyme A. The polypeptide is Dephospho-CoA kinase (Neisseria gonorrhoeae).